Reading from the N-terminus, the 338-residue chain is Glycerol-3-phosphate dehydrogenase [NAD(P)+] (338 aa).

NADPH is bound by residues S13, W14, and K108. Sn-glycerol 3-phosphate-binding residues include K108, G139, and S141. NADPH is bound at residue A143. Sn-glycerol 3-phosphate-binding residues include K194, D247, S257, R258, and N259. The Proton acceptor role is filled by K194. NADPH is bound at residue R258. NADPH is bound by residues V282 and E284.

Belongs to the NAD-dependent glycerol-3-phosphate dehydrogenase family.

It localises to the cytoplasm. The enzyme catalyses sn-glycerol 3-phosphate + NAD(+) = dihydroxyacetone phosphate + NADH + H(+). The catalysed reaction is sn-glycerol 3-phosphate + NADP(+) = dihydroxyacetone phosphate + NADPH + H(+). It participates in membrane lipid metabolism; glycerophospholipid metabolism. In terms of biological role, catalyzes the reduction of the glycolytic intermediate dihydroxyacetone phosphate (DHAP) to sn-glycerol 3-phosphate (G3P), the key precursor for phospholipid synthesis. In Streptococcus pyogenes serotype M12 (strain MGAS9429), this protein is Glycerol-3-phosphate dehydrogenase [NAD(P)+].